Consider the following 372-residue polypeptide: Queuine tRNA-ribosyltransferase (372 aa).

Catalysis depends on Asp92, which acts as the Proton acceptor. Substrate is bound by residues Asp92–Tyr96, Asp146, Gln188, and Gly215. The segment at Gly246–Glu252 is RNA binding. Asp265 (nucleophile) is an active-site residue. Positions Thr270 to Arg274 are RNA binding; important for wobble base 34 recognition. Zn(2+)-binding residues include Cys303, Cys305, Cys308, and His334.

The protein belongs to the queuine tRNA-ribosyltransferase family. In terms of assembly, homodimer. Within each dimer, one monomer is responsible for RNA recognition and catalysis, while the other monomer binds to the replacement base PreQ1. Zn(2+) is required as a cofactor.

It catalyses the reaction 7-aminomethyl-7-carbaguanine + guanosine(34) in tRNA = 7-aminomethyl-7-carbaguanosine(34) in tRNA + guanine. It functions in the pathway tRNA modification; tRNA-queuosine biosynthesis. Functionally, catalyzes the base-exchange of a guanine (G) residue with the queuine precursor 7-aminomethyl-7-deazaguanine (PreQ1) at position 34 (anticodon wobble position) in tRNAs with GU(N) anticodons (tRNA-Asp, -Asn, -His and -Tyr). Catalysis occurs through a double-displacement mechanism. The nucleophile active site attacks the C1' of nucleotide 34 to detach the guanine base from the RNA, forming a covalent enzyme-RNA intermediate. The proton acceptor active site deprotonates the incoming PreQ1, allowing a nucleophilic attack on the C1' of the ribose to form the product. After dissociation, two additional enzymatic reactions on the tRNA convert PreQ1 to queuine (Q), resulting in the hypermodified nucleoside queuosine (7-(((4,5-cis-dihydroxy-2-cyclopenten-1-yl)amino)methyl)-7-deazaguanosine). This is Queuine tRNA-ribosyltransferase from Prochlorococcus marinus subsp. pastoris (strain CCMP1986 / NIES-2087 / MED4).